The following is a 342-amino-acid chain: tRNA N6-adenosine threonylcarbamoyltransferase (342 aa).

The Fe cation site is built by His-111 and His-115. Substrate contacts are provided by residues 134 to 138 (LVSGG), Asp-167, Gly-180, Asp-184, and Asn-273. Asp-298 lines the Fe cation pocket.

Belongs to the KAE1 / TsaD family. Requires Fe(2+) as cofactor.

Its subcellular location is the cytoplasm. The catalysed reaction is L-threonylcarbamoyladenylate + adenosine(37) in tRNA = N(6)-L-threonylcarbamoyladenosine(37) in tRNA + AMP + H(+). Its function is as follows. Required for the formation of a threonylcarbamoyl group on adenosine at position 37 (t(6)A37) in tRNAs that read codons beginning with adenine. Is involved in the transfer of the threonylcarbamoyl moiety of threonylcarbamoyl-AMP (TC-AMP) to the N6 group of A37, together with TsaE and TsaB. TsaD likely plays a direct catalytic role in this reaction. This Gloeobacter violaceus (strain ATCC 29082 / PCC 7421) protein is tRNA N6-adenosine threonylcarbamoyltransferase.